The sequence spans 482 residues: tRNA sulfurtransferase (482 aa).

The 105-residue stretch at 61–165 folds into the THUMP domain; the sequence is AEVLEILTHT…GDKLNQVLAR (105 aa). ATP contacts are provided by residues 183–184, K265, G287, and Q296; that span reads LI. Residues C344 and C456 are joined by a disulfide bond. A Rhodanese domain is found at 404-482; it reads VEEHAVVLDI…GFNNVKVYRP (79 aa). The Cysteine persulfide intermediate role is filled by C456.

Belongs to the ThiI family.

Its subcellular location is the cytoplasm. The enzyme catalyses [ThiI sulfur-carrier protein]-S-sulfanyl-L-cysteine + a uridine in tRNA + 2 reduced [2Fe-2S]-[ferredoxin] + ATP + H(+) = [ThiI sulfur-carrier protein]-L-cysteine + a 4-thiouridine in tRNA + 2 oxidized [2Fe-2S]-[ferredoxin] + AMP + diphosphate. It carries out the reaction [ThiS sulfur-carrier protein]-C-terminal Gly-Gly-AMP + S-sulfanyl-L-cysteinyl-[cysteine desulfurase] + AH2 = [ThiS sulfur-carrier protein]-C-terminal-Gly-aminoethanethioate + L-cysteinyl-[cysteine desulfurase] + A + AMP + 2 H(+). It participates in cofactor biosynthesis; thiamine diphosphate biosynthesis. Its function is as follows. Catalyzes the ATP-dependent transfer of a sulfur to tRNA to produce 4-thiouridine in position 8 of tRNAs, which functions as a near-UV photosensor. Also catalyzes the transfer of sulfur to the sulfur carrier protein ThiS, forming ThiS-thiocarboxylate. This is a step in the synthesis of thiazole, in the thiamine biosynthesis pathway. The sulfur is donated as persulfide by IscS. This chain is tRNA sulfurtransferase, found in Vibrio parahaemolyticus serotype O3:K6 (strain RIMD 2210633).